Here is a 354-residue protein sequence, read N- to C-terminus: Short-chain dehydrogenase/reductase SAT2 (354 aa).

4 residues coordinate NADP(+): I31, D85, R201, and V233.

This sequence belongs to the short-chain dehydrogenases/reductases (SDR) family.

It participates in mycotoxin biosynthesis. In terms of biological role, short-chain dehydrogenase/reductase; part of the satratoxin SC1 cluster involved in the biosynthesis of satratoxins, trichothecene mycotoxins that are associated with human food poisonings. Satratoxins are suggested to be made by products of multiple gene clusters (SC1, SC2 and SC3) that encode 21 proteins in all, including polyketide synthases, acetyltransferases, and other enzymes expected to modify the trichothecene skeleton. SC1 encodes 10 proteins, SAT1 to SAT10. The largest are SAT8, which encodes a putative polyketide synthase (PKS) with a conventional non-reducing architecture, and SAT10, a putative protein containing four ankyrin repeats and thus may be involved in protein scaffolding. The putative short-chain reductase SAT3 may assist the PKS in some capacity. SAT6 contains a secretory lipase domain and acts probably as a trichothecene esterase. SAT5 encodes a putative acetyltransferase, and so, with SAT6, may affect endogenous protection from toxicity. The probable transcription factor SAT9 may regulate the expression of the SC1 cluster. SC2 encodes proteins SAT11 to SAT16, the largest of which encodes the putative reducing PKS SAT13. SAT11 is a cytochrome P450 monooxygenase, while SAT14 and SAT16 are probable acetyltransferases. The SC2 cluster may be regulated by the transcription factor SAT15. SC3 is a small cluster that encodes 5 proteins, SAT17 to SAT21. SAT21 is a putative MFS-type transporter which may have a role in exporting secondary metabolites. The four other proteins putatively encoded in SC3 include the taurine hydroxylase-like protein SAT17, the O-methyltransferase SAT18, the acetyltransferase SAT19, and the Cys6-type zinc finger SAT20, the latter being probably involved in regulation of SC3 expression. The polypeptide is Short-chain dehydrogenase/reductase SAT2 (Stachybotrys chartarum (strain CBS 109288 / IBT 7711) (Toxic black mold)).